The primary structure comprises 363 residues: Pulmonary surfactant-associated protein B (363 aa).

An N-terminal signal peptide occupies residues 1–16 (LLWLLLLPTLCGLGAA). The propeptide occupies 17–180 (DWSAPSLACA…PHTQDLSEQQ (164 aa)). The region spanning 18 to 58 (WSAPSLACARGPAFWCQSLEQALQCRALGHCLQEVWGNARA) is the Saposin A-type domain. Saposin B-type domains follow at residues 58-140 (ADDL…KPGL), 184-261 (PLPY…SHED), and 277-352 (QESK…RTTF). 9 cysteine pairs are disulfide-bonded: cysteine 62/cysteine 136, cysteine 65/cysteine 130, cysteine 93/cysteine 105, cysteine 188/cysteine 257, cysteine 191/cysteine 251, cysteine 215/cysteine 226, cysteine 281/cysteine 348, cysteine 284/cysteine 342, and cysteine 307/cysteine 317. The propeptide occupies 260–363 (EDSAGPALAS…PLQCIHIPHF (104 aa)). Asparagine 293 carries N-linked (GlcNAc...) asparagine glycosylation.

As to quaternary structure, homodimer; disulfide-linked.

It is found in the secreted. The protein localises to the extracellular space. The protein resides in the surface film. Pulmonary surfactant-associated proteins promote alveolar stability by lowering the surface tension at the air-liquid interface in the peripheral air spaces. SP-B increases the collapse pressure of palmitic acid to nearly 70 millinewtons per meter. The chain is Pulmonary surfactant-associated protein B (SFTPB) from Canis lupus familiaris (Dog).